A 1194-amino-acid chain; its full sequence is Multidrug efflux ATP-binding/permease protein BCG_0231 (1194 aa).

6 helical membrane-spanning segments follow: residues 20 to 40, 56 to 76, 130 to 150, 153 to 173, 258 to 278, and 279 to 299; these read LLLGFGAALAGTVIAVLVPLV, LAPWAVVLVAAAGATYLLTYV, LLFDVPNVLRHVLTLLLGVAV, WLSVPLALLAVLLVPVIGLIA, FALGGWMAAQGSITVGTFVAF, and WACLTLLARPACDLAGMLTIA. The ABC transmembrane type-1 1 domain maps to 21-301; the sequence is LLGFGAALAG…LAGMLTIAQQ (281 aa). The region spanning 334–568 is the ABC transporter 1 domain; it reads LEFQRVSFGY…CPRYRELLSP (235 aa). 367–374 is an ATP binding site; the sequence is GAPGSGKS. The next 6 membrane-spanning stretches (helical) occupy residues 628 to 648, 660 to 680, 743 to 763, 765 to 785, 847 to 867, and 878 to 898; these read ALSLLLVAVQTCAGLLPPLLI, VLSALWWAALAGTATVVIRWV, LVVAVISVVTLVGILVALLAI, ARLVLLIFTTMPVLALATWQF, LLALYYPFVALLCSLATTLVL, and VISVGALVTYLLYIELLYTPI. The region spanning 628 to 910 is the ABC transmembrane type-1 2 domain; sequence ALSLLLVAVQ…LAQMFDDYQR (283 aa). Residues 942 to 1177 enclose the ABC transporter 2 domain; the sequence is VVFDAVHYSY…GGHYSRLWAA (236 aa). Position 976–983 (976–983) interacts with ATP; sequence GSTGSGKS.

This sequence belongs to the ABC transporter superfamily. Lipid exporter (TC 3.A.1.106) family.

It is found in the cell inner membrane. Functionally, overexpression increases resistance to chloramphenicol, ampicillin, streptomycin, tetracyclin and vancomycin. In Mycobacterium bovis (strain BCG / Pasteur 1173P2), this protein is Multidrug efflux ATP-binding/permease protein BCG_0231.